The following is a 413-amino-acid chain: Cis,cis-muconate transport protein (413 aa).

Topologically, residues 1 to 16 (MYSNNQRSRIGSHTWK) are cytoplasmic. Residues 17–37 (IAFLFAFLALLVDGADLMLLS) form a helical membrane-spanning segment. The Periplasmic portion of the chain corresponds to 38 to 53 (YSLNSIKAEFNLSTVE). Residues 54-74 (AGMLGSFTLAGMAIGGIFGGW) traverse the membrane as a helical segment. Residues 75 to 85 (ACDRFGRVRIV) lie on the Cytoplasmic side of the membrane. The helical transmembrane segment at 86-106 (VISILTFSILTCGLGLTQSFI) threads the bilayer. The Periplasmic segment spans residues 107–112 (QFGVLR). A helical transmembrane segment spans residues 113–133 (FFASLGLGSLYIACNTLMAEY). Residues 134–145 (VPTKYRTTVLGT) are Cytoplasmic-facing. The chain crosses the membrane as a helical span at residues 146 to 166 (LQAGWTVGYIVATLLAGWLIP). Residues 167 to 171 (DHGWR) are Periplasmic-facing. A helical membrane pass occupies residues 172–192 (VLFYVAIIPVLMAVLMHFFVP). Residues 193 to 228 (EPAAWQQSRLAPSKQTETVKTSAFKLIFQDKRNRNM) lie on the Cytoplasmic side of the membrane. Residues 229 to 249 (FILWALTAGFLQFGYYGVNNW) form a helical membrane-spanning segment. Topologically, residues 250-266 (MPSYLESELGMKFKEMT) are periplasmic. The helical transmembrane segment at 267 to 287 (AYMVGTYTAMILGKILAGFMA) threads the bilayer. Topologically, residues 288 to 293 (DKLGRR) are cytoplasmic. A helical membrane pass occupies residues 294–314 (FTYAFGAIGTAIFLPLIVFYN). The Periplasmic segment spans residues 315–318 (SPDN). A helical transmembrane segment spans residues 319-339 (ILYLLVIFGFLYGIPYGVNAT). Topologically, residues 340–352 (YMTESFPTAIRGT) are cytoplasmic. Residues 353–376 (AIGGAYNVGRLGAAIAPATIGFLA) traverse the membrane as a helical segment. The Periplasmic segment spans residues 377–382 (SGGSIG). Residues 383-403 (LGFVVMGAAYFICGVIPALFI) traverse the membrane as a helical segment. Over 404–413 (KEKQYDPQQS) the chain is Cytoplasmic.

Belongs to the major facilitator superfamily. Aromatic acid:H(+) symporter (AAHS) (TC 2.A.1.15) family.

It localises to the cell inner membrane. Functionally, probable uptake of muconate. In Acinetobacter baylyi (strain ATCC 33305 / BD413 / ADP1), this protein is Cis,cis-muconate transport protein (mucK).